We begin with the raw amino-acid sequence, 438 residues long: Na(+)/H(+) antiporter NhaA (438 aa).

Transmembrane regions (helical) follow at residues 23–43 (FGGI…NSFL), 62–82 (FFIG…LFFL), 104–124 (SFPV…YFFL), 133–153 (GFGI…MLLG), 162–182 (VFLI…IALF), 185–205 (TNLK…LAVL), 212–232 (SLIP…QSGI), 302–322 (FLAP…NAGV), 337–357 (LGVI…ITFI), 372–392 (WWHI…SMFI), and 410–430 (IAIL…LFVL).

The protein belongs to the NhaA Na(+)/H(+) (TC 2.A.33) antiporter family.

The protein localises to the cell inner membrane. The enzyme catalyses Na(+)(in) + 2 H(+)(out) = Na(+)(out) + 2 H(+)(in). In terms of biological role, na(+)/H(+) antiporter that extrudes sodium in exchange for external protons. This is Na(+)/H(+) antiporter NhaA from Helicobacter pylori (strain G27).